A 200-amino-acid chain; its full sequence is MATLSDVFHFAKRCRLDSEFSEVIDSCCYHCIEGLNGVDMGTRELVIFLQRFVPRPVIDSPKPDMVLVEKLVHAHTVYRGCKAEKCEIVKRMVNYLFEVKPKSPALKEYIYKNSETMDIGDYWFDDEMYDIIISNLDWQRTRYTADNVHSCYFLLNTHTSKMCMKKARAAMSRLMSPTTLLVIPWFWKRLNHKMSQKHTM.

This is an uncharacterized protein from Ostreid herpesvirus 1 (isolate France) (OsHV-1).